We begin with the raw amino-acid sequence, 723 residues long: MAEAEGESLESWLNKATNPSNRQEDWEYIIGFCDQINKELEGPQIAVRLLAHKIQSPQEWEALQALTVLEACMKNCGRRFHNEVGKFRFLNELIKVVSPKYLGDRVSEKVKTKVIELLYSWTMALPEEAKIKDAYHMLKRQGIVQSDPPIPVDRTLIPSPPPRPKNPVFDDEEKSKLLAKLLKSKNPDDLQEANKLIKSMVKEDEARIQKVTKRLHTLEEVNNNVRLLSEMLLHYSQEDSSDGDRELMKELFDQCENKRRTLFKLASETEDNDNSLGDILQASDNLSRVINSYKTIIEGQVINGEVATLTLPDSEGNSQCSNQGTLIDLAELDTTNSLSSVLAPAPTPPSSGIPILPPPPQASGPPRSRSSSQAEATLGPSSTSNALSWLDEELLCLGLADPAPNVPPKESAGNSQWHLLQREQSDLDFFSPRPGTAACGASDAPLLQPSAPSSSSSQAPLPPPFPAPVVPASVPAPSAGSSLFSTGVAPALAPKVEPAVPGHHGLALGNSALHHLDALDQLLEEAKVTSGLVKPTTSPLIPTTTPARPLLPFSTGPGSPLFQPLSFQSQGSPPKGPELSLASIHVPLESIKPSSALPVTAYDKNGFRILFHFAKECPPGRPDVLVVVVSMLNTAPLPVKSIVLQAAVPKSMKVKLQPPSGTELSPFSPIQPPAAITQVMLLANPLKEKVRLRYKLTFALGEQLSTEVGEVDQFPPVEQWGNL.

Residues 1–313 (MAEAEGESLE…GEVATLTLPD (313 aa)) are binds to ARF1 (in long isoform). In terms of domain architecture, VHS spans 16 to 146 (ATNPSNRQED…MLKRQGIVQS (131 aa)). A phosphoserine mark is found at Ser159 and Ser275. The GAT domain occupies 171-298 (DEEKSKLLAK…VINSYKTIIE (128 aa)). Residues 299–593 (GQVINGEVAT…IHVPLESIKP (295 aa)) form a unstructured hinge region. The tract at residues 339 to 384 (SSVLAPAPTPPSSGIPILPPPPQASGPPRSRSSSQAEATLGPSSTS) is disordered. The span at 345 to 363 (APTPPSSGIPILPPPPQAS) shows a compositional bias: pro residues. Over residues 364 to 374 (GPPRSRSSSQA) the composition is skewed to low complexity. Residues 391-395 (DEELL) carry the DXXLL motif. The interval 428–464 (DFFSPRPGTAACGASDAPLLQPSAPSSSSSQAPLPPP) is disordered. Low complexity predominate over residues 441-459 (ASDAPLLQPSAPSSSSSQA). The GAE domain maps to 594–715 (SSALPVTAYD…TEVGEVDQFP (122 aa)).

This sequence belongs to the GGA protein family. Monomer. Interacts with GGA1 and GGA2. Binds to clathrin and activated ARFs, such as ARF1, ARF5 and ARF6. Binds RABEP1 and RABGEF1. Interacts with the membrane proteins M6PR/CD-MPR and IGF2R/CI-MPR and the accessory proteins SYNRG, EPN4, NECAP1, NECAP2 and AFTPH/aftiphilin. Interacts with TSG101 and UBC. Interacts with ADRA2B. Interacts with NTRK1; the interaction is independent of NTRK1 activation and ubiquitination. Interacts (via VHS domain) with BACE1 (via DXXLL motif). Post-translationally, phosphorylated by CK2 and dephosphorylated by PP2A. Phosphorylation of GGA3 allows the internal DXXLL motif to bind the VHS domain and to inhibit the recognition of cargo signals. Ubiquitinated. In terms of processing, proteolytically cleaved during apoptosis by CASP3. As to expression, ubiquitously expressed.

The protein localises to the golgi apparatus. It localises to the trans-Golgi network membrane. It is found in the endosome membrane. The protein resides in the early endosome membrane. Its subcellular location is the recycling endosome membrane. In terms of biological role, plays a role in protein sorting and trafficking between the trans-Golgi network (TGN) and endosomes. Mediates the ARF-dependent recruitment of clathrin to the TGN and binds ubiquitinated proteins and membrane cargo molecules with a cytosolic acidic cluster-dileucine (DXXLL) motif. Mediates export of the GPCR receptor ADRA2B to the cell surface. nvolved in BACE1 transport and sorting as well as regulation of BACE1 protein levels. Regulates retrograde transport of BACE1 from endosomes to the trans-Golgi network via interaction through the VHS motif and dependent of BACE1 phosphorylation. Modulates BACE1 protein levels independently of the interaction between VHS domain and DXXLL motif through recognition of ubiquitination. Key player in a novel DXXLL-mediated endosomal sorting machinery to the recycling pathway that targets NTRK1 to the plasma membrane. The polypeptide is ADP-ribosylation factor-binding protein GGA3 (Homo sapiens (Human)).